The primary structure comprises 380 residues: 5-amino-6-(D-ribitylamino)uracil--L-tyrosine 4-hydroxyphenyl transferase (380 aa).

A Radical SAM core domain is found at 56–303 (VTYIINRNIN…GAVARIYLGN (248 aa)). [4Fe-4S] cluster contacts are provided by Cys-70, Cys-74, and Cys-77.

It belongs to the radical SAM superfamily. CofH family. As to quaternary structure, consists of two subunits, CofG and CofH. [4Fe-4S] cluster serves as cofactor.

The catalysed reaction is 5-amino-6-(D-ribitylamino)uracil + L-tyrosine + S-adenosyl-L-methionine = 5-amino-5-(4-hydroxybenzyl)-6-(D-ribitylimino)-5,6-dihydrouracil + 2-iminoacetate + 5'-deoxyadenosine + L-methionine + H(+). The protein operates within cofactor biosynthesis; coenzyme F0 biosynthesis. In terms of biological role, catalyzes the radical-mediated synthesis of 5-amino-5-(4-hydroxybenzyl)-6-(D-ribitylimino)-5,6-dihydrouracil from 5-amino-6-(D-ribitylamino)uracil and L-tyrosine. This Nostoc punctiforme (strain ATCC 29133 / PCC 73102) protein is 5-amino-6-(D-ribitylamino)uracil--L-tyrosine 4-hydroxyphenyl transferase.